A 415-amino-acid polypeptide reads, in one-letter code: Gamma-glutamyl phosphate reductase (415 aa).

Belongs to the gamma-glutamyl phosphate reductase family.

It localises to the cytoplasm. It catalyses the reaction L-glutamate 5-semialdehyde + phosphate + NADP(+) = L-glutamyl 5-phosphate + NADPH + H(+). The protein operates within amino-acid biosynthesis; L-proline biosynthesis; L-glutamate 5-semialdehyde from L-glutamate: step 2/2. Its function is as follows. Catalyzes the NADPH-dependent reduction of L-glutamate 5-phosphate into L-glutamate 5-semialdehyde and phosphate. The product spontaneously undergoes cyclization to form 1-pyrroline-5-carboxylate. The polypeptide is Gamma-glutamyl phosphate reductase (Mycolicibacterium vanbaalenii (strain DSM 7251 / JCM 13017 / BCRC 16820 / KCTC 9966 / NRRL B-24157 / PYR-1) (Mycobacterium vanbaalenii)).